Consider the following 700-residue polypeptide: DNA ligase (700 aa).

Residues 42–46 (DDEYD), 91–92 (SL), and glutamate 126 each bind NAD(+). The active-site N6-AMP-lysine intermediate is the lysine 128. NAD(+) is bound by residues arginine 149, glutamate 184, lysine 300, and lysine 324. Cysteine 418, cysteine 421, cysteine 436, and cysteine 441 together coordinate Zn(2+). The 89-residue stretch at 598-686 (TRTDQLSGLN…GLGERGVAED (89 aa)) folds into the BRCT domain.

Belongs to the NAD-dependent DNA ligase family. LigA subfamily. It depends on Mn(2+) as a cofactor.

It carries out the reaction NAD(+) + (deoxyribonucleotide)n-3'-hydroxyl + 5'-phospho-(deoxyribonucleotide)m = (deoxyribonucleotide)n+m + AMP + beta-nicotinamide D-nucleotide.. DNA ligase that catalyzes the formation of phosphodiester linkages between 5'-phosphoryl and 3'-hydroxyl groups in double-stranded DNA using NAD as a coenzyme and as the energy source for the reaction. It is essential for DNA replication and repair of damaged DNA. This chain is DNA ligase, found in Deinococcus radiodurans (strain ATCC 13939 / DSM 20539 / JCM 16871 / CCUG 27074 / LMG 4051 / NBRC 15346 / NCIMB 9279 / VKM B-1422 / R1).